A 708-amino-acid polypeptide reads, in one-letter code: Killer toxin KHS (708 aa).

A signal peptide spans 1 to 27; the sequence is MPRFAIIFALLIAYSLFLSTLFTGSIP. A propeptide spanning residues 28–36 is cleaved from the precursor; that stretch reads DRANTVTSN. The next 3 membrane-spanning stretches (helical) occupy residues 77–97, 380–400, and 466–486; these read VCTI…AVLV, IMMK…IYVI, and NIIY…VIVH.

To yeast YER187w. Monomer.

The protein localises to the cell membrane. Functionally, kills sensitive strains of yeast. This chain is Killer toxin KHS (KHS1), found in Saccharomyces cerevisiae (Baker's yeast).